The primary structure comprises 144 residues: Probable low molecular weight protein-tyrosine-phosphatase AmsI (144 aa).

Residue Cys-9 is the Nucleophile of the active site. Arg-15 is a catalytic residue. Asp-115 acts as the Proton donor in catalysis.

Belongs to the low molecular weight phosphotyrosine protein phosphatase family.

The catalysed reaction is O-phospho-L-tyrosyl-[protein] + H2O = L-tyrosyl-[protein] + phosphate. In terms of biological role, may function as a phosphatase required for amylovoran (an exopolysaccharide that functions as a virulence factor) production. This Erwinia amylovora (Fire blight bacteria) protein is Probable low molecular weight protein-tyrosine-phosphatase AmsI (amsI).